The sequence spans 326 residues: Pectate lyase plyB (326 aa).

The N-terminal stretch at 1–15 (MRFTPLFLLAAVAIA) is a signal peptide. 3 residues coordinate Ca(2+): aspartate 133, aspartate 162, and aspartate 166. The active site involves arginine 219.

Belongs to the polysaccharide lyase 1 family. Ca(2+) serves as cofactor.

Its subcellular location is the secreted. The enzyme catalyses Eliminative cleavage of (1-&gt;4)-alpha-D-galacturonan to give oligosaccharides with 4-deoxy-alpha-D-galact-4-enuronosyl groups at their non-reducing ends.. It participates in glycan metabolism; pectin degradation; 2-dehydro-3-deoxy-D-gluconate from pectin: step 2/5. Its function is as follows. Pectinolytic enzyme consist of four classes of enzymes: pectin lyase, polygalacturonase, pectin methylesterase and rhamnogalacturonase. Among pectinolytic enzymes, pectin lyase is the most important in depolymerization of pectin, since it cleaves internal glycosidic bonds of highly methylated pectins. The polypeptide is Pectate lyase plyB (plyB) (Emericella nidulans (strain FGSC A4 / ATCC 38163 / CBS 112.46 / NRRL 194 / M139) (Aspergillus nidulans)).